Consider the following 468-residue polypeptide: Peroxisome proliferator-activated receptor alpha (468 aa).

A DNA-binding region (nuclear receptor) is located at residues 99-173; it reads NIECRICGDK…VGMSHNAIRF (75 aa). NR C4-type zinc fingers lie at residues 102–122 and 139–161; these read CRICGDKASGYHYGVHACEGC and CDRSCKIQKKNRNKCQYCRFHKC. The NR LBD domain occupies 239–466; that stretch reads FVIHDMETLC…HPLLQEIYRD (228 aa). Residues Ser280, Tyr314, and Tyr464 each contribute to the indeglitazar site. A required for heterodimerization with RXRA region spans residues 304–433; it reads DQVTLLKYGV…PKLLQKMADL (130 aa).

The protein belongs to the nuclear hormone receptor family. NR1 subfamily. As to quaternary structure, heterodimer; with RXRA. This heterodimerization is required for DNA binding and transactivation activity. Interacts with NCOA3 coactivator. Interacts with CITED2; the interaction stimulates its transcriptional activity. Also interacts with PPARBP in vitro. Interacts with AKAP13, LPIN1, PRDM16 and coactivator NCOA6. Interacts with ASXL1 and ASXL2. Interacts with PER2. Interacts with SIRT1; the interaction seems to be modulated by NAD(+) levels. Interacts with CRY1 and CRY2. In hepatocytes, interacts with PAQR3 and HUWE1; the interactions promote PPARA poylubiquitination and HUWE1-mediated degradation. Ubiquitinated by E3 ubiquitin-protein ligase HUWE1; leading to proteasomal degradation. Post-translationally, phosphorylated. In terms of tissue distribution, skeletal muscle, liver, heart and kidney. Expressed in monocytes.

It localises to the nucleus. Its function is as follows. Ligand-activated transcription factor. Key regulator of lipid metabolism. Activated by the endogenous ligand 1-palmitoyl-2-oleoyl-sn-glycerol-3-phosphocholine (16:0/18:1-GPC). Activated by oleylethanolamide, a naturally occurring lipid that regulates satiety. Receptor for peroxisome proliferators such as hypolipidemic drugs and fatty acids. Regulates the peroxisomal beta-oxidation pathway of fatty acids. Functions as a transcription activator for the ACOX1 and P450 genes. Transactivation activity requires heterodimerization with RXRA and is antagonized by NR2C2. May be required for the propagation of clock information to metabolic pathways regulated by PER2. The chain is Peroxisome proliferator-activated receptor alpha (PPARA) from Homo sapiens (Human).